The chain runs to 165 residues: Fatty acid-binding protein homolog 3 (165 aa).

Positions Met-1–Ala-19 are cleaved as a signal peptide.

The protein belongs to the calycin superfamily. Fatty-acid binding protein (FABP) family. As to expression, expressed in presumptive hypodermal cells by the comma stage and in posterior body wall muscle cells by the two-fold stage. From L1 to adult stages, expression continues in body wall muscle cells adjacent to the pseudocoelom, while hypodermal expression is extinguished.

The protein resides in the secreted. In terms of biological role, may play a role in sequestering potentially toxic fatty acids and their peroxidation products, or it may be involved in the maintenance of the impermeable lipid layer of the eggshell. This chain is Fatty acid-binding protein homolog 3 (lbp-3), found in Caenorhabditis elegans.